A 475-amino-acid chain; its full sequence is MSPQTETKASVGFKAGVKEYKLTYYTPEYEVKDTDILAAFRVTPQPGVPPEEAGAAVAAESSTGTWTTVWTDGLTSLDRYKGRCYDIEPVPGEEDQYICYVAYPLDLFEEGSVTNMFTSIVGNVFGFKALRALRLEDLRVPTAYIKTFQGPPHGIQVERDKLNKYGRPLLGCTIKPKLGLSAKNYGRAVYECLRGGLDFTKDDENVNSQPFMRWRDRFLFCAEAIFKSQAETGEIKGHYLNATAGTCEEMIKRAMCARELGVPIVMHDYLTGGFTANTSLAHYCRDNGLLLHIHRAMHAVIDRQKNHGMHFRVLAKALRMSGGDHIHAGTVVGKLEGERDITLGFVDLLRDDFIEKDRSRGIYFTQDWVSMPGVLPVASGGIHVWHMPALTEIFGDDSVLQFGGGTLGHPWGNAPGAVANRVALEACVQARNEGRDLAREGNEIIREASKWSPELAAACEVWKAIKFEFEAMDTL.

Residues 1 to 2 (MS) constitute a propeptide that is removed on maturation. Pro3 bears the N-acetylproline mark. Lys14 bears the N6,N6,N6-trimethyllysine mark. Residues Asn123 and Thr173 each coordinate substrate. Lys175 serves as the catalytic Proton acceptor. Lys177 contributes to the substrate binding site. 3 residues coordinate Mg(2+): Lys201, Asp203, and Glu204. Position 201 is an N6-carboxylysine (Lys201). Residue His294 is the Proton acceptor of the active site. Substrate-binding residues include Arg295, His327, and Ser379.

It belongs to the RuBisCO large chain family. Type I subfamily. In terms of assembly, heterohexadecamer of 8 large chains and 8 small chains; disulfide-linked. The disulfide link is formed within the large subunit homodimers. It depends on Mg(2+) as a cofactor. In terms of processing, the disulfide bond which can form in the large chain dimeric partners within the hexadecamer appears to be associated with oxidative stress and protein turnover.

It is found in the plastid. Its subcellular location is the chloroplast. The enzyme catalyses 2 (2R)-3-phosphoglycerate + 2 H(+) = D-ribulose 1,5-bisphosphate + CO2 + H2O. The catalysed reaction is D-ribulose 1,5-bisphosphate + O2 = 2-phosphoglycolate + (2R)-3-phosphoglycerate + 2 H(+). Functionally, ruBisCO catalyzes two reactions: the carboxylation of D-ribulose 1,5-bisphosphate, the primary event in carbon dioxide fixation, as well as the oxidative fragmentation of the pentose substrate in the photorespiration process. Both reactions occur simultaneously and in competition at the same active site. This Gossypium hirsutum (Upland cotton) protein is Ribulose bisphosphate carboxylase large chain.